A 193-amino-acid polypeptide reads, in one-letter code: dTTP/UTP pyrophosphatase (193 aa).

D77 functions as the Proton acceptor in the catalytic mechanism.

This sequence belongs to the Maf family. YhdE subfamily. A divalent metal cation serves as cofactor.

The protein localises to the cytoplasm. It catalyses the reaction dTTP + H2O = dTMP + diphosphate + H(+). The enzyme catalyses UTP + H2O = UMP + diphosphate + H(+). Functionally, nucleoside triphosphate pyrophosphatase that hydrolyzes dTTP and UTP. May have a dual role in cell division arrest and in preventing the incorporation of modified nucleotides into cellular nucleic acids. The sequence is that of dTTP/UTP pyrophosphatase from Parabacteroides distasonis (strain ATCC 8503 / DSM 20701 / CIP 104284 / JCM 5825 / NCTC 11152).